A 116-amino-acid chain; its full sequence is Iron-sulfur cluster insertion protein ErpA (116 aa).

Residues cysteine 44, cysteine 108, and cysteine 110 each coordinate iron-sulfur cluster.

Belongs to the HesB/IscA family. Homodimer. It depends on iron-sulfur cluster as a cofactor.

In terms of biological role, required for insertion of 4Fe-4S clusters for at least IspG. The polypeptide is Iron-sulfur cluster insertion protein ErpA (Pseudomonas aeruginosa (strain LESB58)).